The primary structure comprises 62 residues: Small ribosomal subunit protein eS27 (62 aa).

Cys-17, Cys-20, Cys-36, and Cys-39 together coordinate Zn(2+). A C4-type zinc finger spans residues 17-39; sequence CPDCDNEQTVFSKASTTVKCVVC.

This sequence belongs to the eukaryotic ribosomal protein eS27 family. In terms of assembly, part of the 30S ribosomal subunit. Zn(2+) is required as a cofactor.

This chain is Small ribosomal subunit protein eS27, found in Methanoregula boonei (strain DSM 21154 / JCM 14090 / 6A8).